Here is a 517-residue protein sequence, read N- to C-terminus: MVVTSSAGCASRPRGRGRWPRLSRRSGCLEVPGRPRRPFLRPTVPGPTSARPRRGRAPHGRSTRCTGWRVQLSFSCPPFIKNRQFQFYLIRSPFSRVGYGLSDVNSSSLLGLWGIKFFACWENSNMIYIFKMLGYNQDKLPITSERLVPMASSISPEKLGAKIVEWYSCIVSREVEQAEEYKQEIGQLVNQLERSDEKVLSYYSLVLFRHQLLTEDVQQKRVEPTSLQAVNVEDTIYDGLLAFLYYFMSGQYEFYEGRYQSALRLYKIAEQKIDHVHDQSEKAEFYFRLGESYFAHHQYTFAVSYLEQAIDLFENNNFIWTILNCRLLLAAIKTELNLFDEAEKEYQSALADATPYPTTHALLLRALGLNRVRQRKLYEAEMYFAEALTIGDHSKSVEGLKTKANLANVRLRQNANNAEAIRLLQEAKAGATAIHLEECMVRCAITEALYINEGRDERLTSELQRLLEREFYTEYSELAEEIAEYYKQQSLLEKAFYYMKEALHYRTNMKMIGVEQQ.

Disordered regions lie at residues 1–21 (MVVT…RWPR) and 33–62 (GRPR…HGRS). A compositionally biased stretch (basic residues) spans 51-62 (RPRRGRAPHGRS). TPR repeat units lie at residues 283 to 316 (AEFY…FENN), 361 to 394 (ALLL…GDHS), and 476 to 509 (SELA…RTNM).

It catalyses the reaction a 2'-deoxyadenosine in DNA + S-adenosyl-L-methionine = an N(6)-methyl-2'-deoxyadenosine in DNA + S-adenosyl-L-homocysteine + H(+). Its function is as follows. A methylase, recognizes the double-stranded sequence 5'-GATATC-3', methylates A-? on both strands, and protects the DNA from cleavage by the CeqI endonuclease. This is Type II methyltransferase M.CeqI (ceqIM) from Rhodococcus hoagii (Corynebacterium equii).